The following is a 186-amino-acid chain: Zinc finger AN1 domain-containing stress-associated protein 12 (186 aa).

AN1-type zinc fingers lie at residues 10–58 and 97–147; these read PDLG…HGSR and KKKK…INTA. Zn(2+)-binding residues include Cys-16, Cys-21, Cys-31, Cys-34, Cys-39, His-42, His-48, Cys-50, Cys-103, Cys-108, Cys-120, Cys-123, Cys-128, His-131, His-137, and Cys-139. A disordered region spans residues 167 to 186; it reads KGCGRGSSVSSKSSPSVRSF. Positions 172–186 are enriched in low complexity; that stretch reads GSSVSSKSSPSVRSF.

Functionally, may be involved in environmental stress response. This is Zinc finger AN1 domain-containing stress-associated protein 12 (SAP12) from Arabidopsis thaliana (Mouse-ear cress).